A 208-amino-acid chain; its full sequence is ATP phosphoribosyltransferase (208 aa).

The protein belongs to the ATP phosphoribosyltransferase family. Short subfamily. As to quaternary structure, heteromultimer composed of HisG and HisZ subunits.

Its subcellular location is the cytoplasm. The enzyme catalyses 1-(5-phospho-beta-D-ribosyl)-ATP + diphosphate = 5-phospho-alpha-D-ribose 1-diphosphate + ATP. It functions in the pathway amino-acid biosynthesis; L-histidine biosynthesis; L-histidine from 5-phospho-alpha-D-ribose 1-diphosphate: step 1/9. Catalyzes the condensation of ATP and 5-phosphoribose 1-diphosphate to form N'-(5'-phosphoribosyl)-ATP (PR-ATP). Has a crucial role in the pathway because the rate of histidine biosynthesis seems to be controlled primarily by regulation of HisG enzymatic activity. The sequence is that of ATP phosphoribosyltransferase (hisG) from Thermotoga maritima (strain ATCC 43589 / DSM 3109 / JCM 10099 / NBRC 100826 / MSB8).